A 359-amino-acid chain; its full sequence is 3-dehydroquinate synthase (359 aa).

Residues 69 to 74, 103 to 107, 127 to 128, Lys-140, Lys-149, and 167 to 170 each bind NAD(+); these read DGEAHK, GVIGD, TT, and TLDT. Zn(2+) is bound by residues Glu-182, His-245, and His-262.

This sequence belongs to the sugar phosphate cyclases superfamily. Dehydroquinate synthase family. Co(2+) is required as a cofactor. It depends on Zn(2+) as a cofactor. NAD(+) serves as cofactor.

The protein resides in the cytoplasm. It catalyses the reaction 7-phospho-2-dehydro-3-deoxy-D-arabino-heptonate = 3-dehydroquinate + phosphate. It functions in the pathway metabolic intermediate biosynthesis; chorismate biosynthesis; chorismate from D-erythrose 4-phosphate and phosphoenolpyruvate: step 2/7. In terms of biological role, catalyzes the conversion of 3-deoxy-D-arabino-heptulosonate 7-phosphate (DAHP) to dehydroquinate (DHQ). This Methylococcus capsulatus (strain ATCC 33009 / NCIMB 11132 / Bath) protein is 3-dehydroquinate synthase.